Consider the following 459-residue polypeptide: ATP synthase subunit beta (459 aa).

Residue 149-156 coordinates ATP; sequence GGAGVGKT.

It belongs to the ATPase alpha/beta chains family. F-type ATPases have 2 components, CF(1) - the catalytic core - and CF(0) - the membrane proton channel. CF(1) has five subunits: alpha(3), beta(3), gamma(1), delta(1), epsilon(1). CF(0) has three main subunits: a(1), b(2) and c(9-12). The alpha and beta chains form an alternating ring which encloses part of the gamma chain. CF(1) is attached to CF(0) by a central stalk formed by the gamma and epsilon chains, while a peripheral stalk is formed by the delta and b chains.

The protein resides in the cell inner membrane. It catalyses the reaction ATP + H2O + 4 H(+)(in) = ADP + phosphate + 5 H(+)(out). Functionally, produces ATP from ADP in the presence of a proton gradient across the membrane. The catalytic sites are hosted primarily by the beta subunits. This Pseudomonas syringae pv. syringae (strain B728a) protein is ATP synthase subunit beta.